The chain runs to 211 residues: MTTETFVKDIKPGLKNLNLIFIVLETGRVTKTKDGHEVRTCKVADKTGSINISVWDDVGNLIQPGDIIRLTKGYASVFKGCLTLYTGRGGDLQKIGEFCMVYSEVPNFSEPNPEYSAQQAPNKTVQNDSGPAAPQPPTGPPATSPASESQNGNGLSAPPGSGGGPHPPHTPSHPPSTRITRSQPNHTAAGPPGPSNNPVSNGKETRRSSKR.

Positions 22 to 92 (IVLETGRVTK…TLYTGRGGDL (71 aa)) form a DNA-binding region, OB. Positions 110–211 (EPNPEYSAQQ…GKETRRSSKR (102 aa)) are disordered. Residues 115–128 (YSAQQAPNKTVQND) show a composition bias toward polar residues. Composition is skewed to pro residues over residues 133–143 (APQPPTGPPAT) and 165–174 (PHPPHTPSHP).

Belongs to the SOSS-B family. SOSS-B1 subfamily. Component of the SOSS complex, composed of SOSS-B (SOSS-B1/NABP2 or SOSS-B2/NABP1), SOSS-A/INTS3 and SOSS-C/INIP. SOSS complexes containing SOSS-B1/NABP2 are more abundant than complexes containing SOSS-B2/NABP1. Directly interacts with ATM, SOSS-A/INTS3 and RAD51. Interacts with INTS7. Phosphorylated by ATM in response to DNA damage. Phosphorylation prevents degradation by the proteasome, hence stabilization of the protein and accumulation within cells. Post-translationally, ubiquitinated in a FBXL5-dependent manner, leading to proteasomal degradation.

It localises to the nucleus. Its function is as follows. Component of the SOSS complex, a multiprotein complex that functions downstream of the MRN complex to promote DNA repair and G2/M checkpoint. In the SOSS complex, acts as a sensor of single-stranded DNA that binds to single-stranded DNA, in particular to polypyrimidines. The SOSS complex associates with DNA lesions and influences diverse endpoints in the cellular DNA damage response including cell-cycle checkpoint activation, recombinational repair and maintenance of genomic stability. Required for efficient homologous recombination-dependent repair of double-strand breaks (DSBs) and ATM-dependent signaling pathways. In Bos taurus (Bovine), this protein is SOSS complex subunit B1 (NABP2).